The primary structure comprises 115 residues: Glutaredoxin 4 (115 aa).

Residues 5 to 107 enclose the Glutaredoxin domain; the sequence is IEKIQRQIAE…QLIKETAAKY (103 aa). Lys22 serves as a coordination point for glutathione. Cys30 provides a ligand contact to [2Fe-2S] cluster. Residues Arg59, Phe71, and 84-85 each bind glutathione; that span reads CD.

Belongs to the glutaredoxin family. Monothiol subfamily. As to quaternary structure, homodimer.

It localises to the cytoplasm. Its function is as follows. Monothiol glutaredoxin involved in the biogenesis of iron-sulfur clusters. The sequence is that of Glutaredoxin 4 (grxD) from Shigella flexneri.